The primary structure comprises 189 residues: Adenylate kinase (189 aa).

11–16 (GSGKGT) provides a ligand contact to ATP. An NMP region spans residues 31–60 (STGDVLRAEIKKGTELGKTAKGYIDQGQLL). AMP is bound by residues T32, R37, 58-60 (QLL), 86-89 (GFPR), and Q93. Residues 127 to 137 (KRGQESGRADD) form an LID region. R128 lines the ATP pocket. AMP is bound by residues R134 and R145. G173 lines the ATP pocket.

It belongs to the adenylate kinase family. Monomer.

It localises to the cytoplasm. The enzyme catalyses AMP + ATP = 2 ADP. Its pathway is purine metabolism; AMP biosynthesis via salvage pathway; AMP from ADP: step 1/1. Functionally, catalyzes the reversible transfer of the terminal phosphate group between ATP and AMP. Plays an important role in cellular energy homeostasis and in adenine nucleotide metabolism. This is Adenylate kinase from Phocaeicola vulgatus (strain ATCC 8482 / DSM 1447 / JCM 5826 / CCUG 4940 / NBRC 14291 / NCTC 11154) (Bacteroides vulgatus).